Consider the following 99-residue polypeptide: Cell cycle protein GpsB (99 aa).

Residues 34–71 (LDMIIKDYETFHQEIEELQQENLQLKKQLEEASKKQPV) adopt a coiled-coil conformation.

This sequence belongs to the GpsB family. In terms of assembly, forms polymers through the coiled coil domains. Interacts with PBP1, MreC and EzrA.

Its subcellular location is the cytoplasm. Its function is as follows. Divisome component that associates with the complex late in its assembly, after the Z-ring is formed, and is dependent on DivIC and PBP2B for its recruitment to the divisome. Together with EzrA, is a key component of the system that regulates PBP1 localization during cell cycle progression. Its main role could be the removal of PBP1 from the cell pole after pole maturation is completed. Also contributes to the recruitment of PBP1 to the division complex. Not essential for septum formation. The polypeptide is Cell cycle protein GpsB (Bacillus velezensis (strain DSM 23117 / BGSC 10A6 / LMG 26770 / FZB42) (Bacillus amyloliquefaciens subsp. plantarum)).